The chain runs to 390 residues: Zinc finger CCCH domain-containing protein 46 (390 aa).

The C3H1-type zinc finger occupies serine 2 to proline 29. Residues alanine 27–glutamine 129 form a disordered region. The segment covering glycine 48–phenylalanine 76 has biased composition (low complexity). The span at proline 106 to glutamine 129 shows a compositional bias: polar residues. A required for transcriptional activation activity region spans residues tryptophan 146–proline 211. Over residues serine 230 to glutamine 248 the composition is skewed to polar residues. A disordered region spans residues serine 230 to threonine 284. Over residues glycine 250–alanine 268 the composition is skewed to low complexity.

In terms of assembly, interacts with GSK1 and GSK4. Phosphorylated on serine and threonine residues by GSK1. Phosphorylation represses nuclear localization. Expressed in the adaxial face of the collar, nodes and the basal region of elongating internodes.

The protein localises to the nucleus. The protein resides in the cytoplasm. Functionally, transcriptional activator that binds double-stranded DNA and the single-stranded RNA polymers poly(rA), poly(rU) and poly(rG), but not poly(rC). Mediates optimal plant architecture through brassinosteroid (BR) signaling. May act as a negative regulator in sterol homeostasis. Acts as a negative regulator of BR signaling. Binds to the specific DNA sequence 5'-CTCGC-3' of BZR1 promoter and negatively regulates BZR1. Acts as an antagonistic transcription factor of BZR1 to attenuate the BR signaling pathway and regulate leaf bending. Represses the expression of ILI1, and activates that of IBH1 to balance the regulation activity of BZR1. In Oryza sativa subsp. japonica (Rice), this protein is Zinc finger CCCH domain-containing protein 46.